The sequence spans 316 residues: Transaldolase (316 aa).

Lysine 125 (schiff-base intermediate with substrate) is an active-site residue.

The protein belongs to the transaldolase family. Type 1 subfamily. Homodimer.

Its subcellular location is the cytoplasm. The enzyme catalyses D-sedoheptulose 7-phosphate + D-glyceraldehyde 3-phosphate = D-erythrose 4-phosphate + beta-D-fructose 6-phosphate. It participates in carbohydrate degradation; pentose phosphate pathway; D-glyceraldehyde 3-phosphate and beta-D-fructose 6-phosphate from D-ribose 5-phosphate and D-xylulose 5-phosphate (non-oxidative stage): step 2/3. In terms of biological role, transaldolase is important for the balance of metabolites in the pentose-phosphate pathway. This chain is Transaldolase, found in Acidovorax ebreus (strain TPSY) (Diaphorobacter sp. (strain TPSY)).